Here is a 466-residue protein sequence, read N- to C-terminus: Neuropeptide Y receptor type 5 (466 aa).

Residues 1-63 (MEVKLEEHFN…YRGSVDDLQY (63 aa)) are Extracellular-facing. Asparagine 10, asparagine 17, asparagine 38, and asparagine 39 each carry an N-linked (GlcNAc...) asparagine glycan. A helical transmembrane segment spans residues 64 to 84 (FLIGLYTFVSLLGFMGNLLIL). At 85–98 (MAVMKKRNQKTTVN) the chain is on the cytoplasmic side. Residues 99–119 (FLIGNLAFSDILVVLFCSPFT) traverse the membrane as a helical segment. The Extracellular portion of the chain corresponds to 120–138 (LTSVLLDQWMFGKAMCHIM). A disulfide bond links cysteine 135 and cysteine 219. A helical membrane pass occupies residues 139-159 (PFLQCVSVLVSTLILISIAIV). Over 160-177 (RYHMIKHPISNNLTANHG) the chain is Cytoplasmic. The chain crosses the membrane as a helical span at residues 178 to 198 (YFLIATVWTLGFAICSPLPVF). Residues 199–229 (HSLVELKETFGSALLSSKYLCVESWPSDSYR) lie on the Extracellular side of the membrane. The chain crosses the membrane as a helical span at residues 230–250 (IAFTISLLLVQYILPLVCLTV). At 251 to 389 (SHTSVCRSIS…KKRSRSVFYR (139 aa)) the chain is on the cytoplasmic side. Residues 323–346 (GPSQEKHLTVPENPGSVRSQLSPS) are disordered. Residues 390–410 (LTILILVFAVSWMPLHVFHVV) form a helical membrane-spanning segment. Topologically, residues 411-427 (TDFNDNLISNRHFKLVY) are extracellular. A helical transmembrane segment spans residues 428 to 448 (CICHLLGMMSCCLNPILYGFL). Topologically, residues 449–466 (NNGIKADLRALIHCLHMS) are cytoplasmic. Cysteine 462 carries the S-palmitoyl cysteine lipid modification.

This sequence belongs to the G-protein coupled receptor 1 family.

It localises to the cell membrane. Receptor for neuropeptide Y and peptide YY. The activity of this receptor is mediated by G proteins that inhibit adenylate cyclase activity. Seems to be associated with food intake. Could be involved in feeding disorders. The polypeptide is Neuropeptide Y receptor type 5 (Npy5r) (Mus musculus (Mouse)).